The following is an 84-amino-acid chain: Metallothionein type 2b (84 aa).

This sequence belongs to the metallothionein superfamily. Type 15 family. Expressed in leaves, stems and roots.

The protein resides in the cytoplasm. It localises to the nucleus. Functionally, metallothioneins have a high content of cysteine residues that bind various heavy metals. Probably involved in maintaining homeostasis of essential transition metals and detoxification of toxic metals. Increases cadmium and zinc tolerance when expressed in heterologous systems. Metal chelator binding 6 cadmium or 5 zinc atoms per protein. This is Metallothionein type 2b from Colocasia esculenta (Wild taro).